A 251-amino-acid polypeptide reads, in one-letter code: Ubiquinone/menaquinone biosynthesis C-methyltransferase UbiE (251 aa).

S-adenosyl-L-methionine is bound by residues Thr74, Asp95, 123 to 124 (NA), and Ser140.

Belongs to the class I-like SAM-binding methyltransferase superfamily. MenG/UbiE family.

The enzyme catalyses a 2-demethylmenaquinol + S-adenosyl-L-methionine = a menaquinol + S-adenosyl-L-homocysteine + H(+). It carries out the reaction a 2-methoxy-6-(all-trans-polyprenyl)benzene-1,4-diol + S-adenosyl-L-methionine = a 5-methoxy-2-methyl-3-(all-trans-polyprenyl)benzene-1,4-diol + S-adenosyl-L-homocysteine + H(+). The protein operates within quinol/quinone metabolism; menaquinone biosynthesis; menaquinol from 1,4-dihydroxy-2-naphthoate: step 2/2. Its pathway is cofactor biosynthesis; ubiquinone biosynthesis. Methyltransferase required for the conversion of demethylmenaquinol (DMKH2) to menaquinol (MKH2) and the conversion of 2-polyprenyl-6-methoxy-1,4-benzoquinol (DDMQH2) to 2-polyprenyl-3-methyl-6-methoxy-1,4-benzoquinol (DMQH2). In Cronobacter sakazakii (strain ATCC BAA-894) (Enterobacter sakazakii), this protein is Ubiquinone/menaquinone biosynthesis C-methyltransferase UbiE.